Consider the following 380-residue polypeptide: Cytochrome b (380 aa).

4 helical membrane passes run 34-54 (FGWL…FLAM), 78-99 (WLLR…YFHI), 114-134 (WNIG…GYVL), and 179-199 (FFTF…IHLL). Positions 84 and 98 each coordinate heme b. Heme b-binding residues include His-183 and His-197. A ubiquinone is bound at residue His-202. The next 4 membrane-spanning stretches (helical) occupy residues 227-247 (FKDL…STFA), 289-309 (LGGV…PIIH), 321-341 (AAKA…WIGG), and 348-368 (FISI…LIIP).

The protein belongs to the cytochrome b family. As to quaternary structure, the cytochrome bc1 complex contains 3 respiratory subunits (MT-CYB, CYC1 and UQCRFS1), 2 core proteins (UQCRC1 and UQCRC2) and probably 6 low-molecular weight proteins. Heme b is required as a cofactor.

It is found in the mitochondrion inner membrane. In terms of biological role, component of the ubiquinol-cytochrome c reductase complex (complex III or cytochrome b-c1 complex) that is part of the mitochondrial respiratory chain. The b-c1 complex mediates electron transfer from ubiquinol to cytochrome c. Contributes to the generation of a proton gradient across the mitochondrial membrane that is then used for ATP synthesis. The polypeptide is Cytochrome b (mt-cyb) (Rana dybowskii (Dybovsky's frog)).